Here is a 469-residue protein sequence, read N- to C-terminus: 3-isopropylmalate dehydratase large subunit (469 aa).

Positions 350, 410, and 413 each coordinate [4Fe-4S] cluster.

This sequence belongs to the aconitase/IPM isomerase family. LeuC type 1 subfamily. As to quaternary structure, heterodimer of LeuC and LeuD. Requires [4Fe-4S] cluster as cofactor.

It carries out the reaction (2R,3S)-3-isopropylmalate = (2S)-2-isopropylmalate. It participates in amino-acid biosynthesis; L-leucine biosynthesis; L-leucine from 3-methyl-2-oxobutanoate: step 2/4. Catalyzes the isomerization between 2-isopropylmalate and 3-isopropylmalate, via the formation of 2-isopropylmaleate. The polypeptide is 3-isopropylmalate dehydratase large subunit (Brucella abortus (strain S19)).